Reading from the N-terminus, the 202-residue chain is Na(+)-translocating NADH-quinone reductase subunit E (202 aa).

The next 6 membrane-spanning stretches (helical) occupy residues Ala-11–Val-31, Val-35–Val-55, Phe-81–Ala-101, Gly-114–Val-134, Val-144–Ile-164, and Leu-180–Ile-200.

This sequence belongs to the NqrDE/RnfAE family. Composed of six subunits; NqrA, NqrB, NqrC, NqrD, NqrE and NqrF.

The protein localises to the cell inner membrane. It carries out the reaction a ubiquinone + n Na(+)(in) + NADH + H(+) = a ubiquinol + n Na(+)(out) + NAD(+). Its function is as follows. NQR complex catalyzes the reduction of ubiquinone-1 to ubiquinol by two successive reactions, coupled with the transport of Na(+) ions from the cytoplasm to the periplasm. NqrA to NqrE are probably involved in the second step, the conversion of ubisemiquinone to ubiquinol. In Pseudoalteromonas translucida (strain TAC 125), this protein is Na(+)-translocating NADH-quinone reductase subunit E.